The following is a 271-amino-acid chain: uncharacterized protein (271 aa).

The interval 1–202 (MLNSPGTRRP…APSSALSHQG (202 aa)) is disordered. Basic and acidic residues predominate over residues 10 to 23 (PVKEAQKYGEDSQK). 2 stretches are compositionally biased toward low complexity: residues 33-50 (RSSV…SSSP) and 59-73 (GRPS…TSAP). The span at 92 to 101 (TRSSANQLPQ) shows a compositional bias: polar residues. Over residues 121–142 (LRRRSHGDRCVPRSRRRPRPRP) the composition is skewed to basic residues.

This is an uncharacterized protein from Homo sapiens (Human).